Here is a 462-residue protein sequence, read N- to C-terminus: Metacaspase-1 (462 aa).

The segment covering Met-1–Gln-21 has biased composition (pro residues). The tract at residues Met-1–Phe-150 is disordered. Positions Gln-22–Tyr-33 are enriched in low complexity. Pro residues-rich tracts occupy residues Pro-49–Ser-69 and Ser-77–Pro-102. Residues His-253 and Cys-309 contribute to the active site.

This sequence belongs to the peptidase C14B family.

Its function is as follows. Involved in cell death (apoptosis). In Coccidioides immitis (strain RS) (Valley fever fungus), this protein is Metacaspase-1 (MCA1).